The sequence spans 104 residues: Viral histone-like protein (104 aa).

It belongs to the bacterial histone-like protein family. As to quaternary structure, homodimer.

It is found in the virion. With respect to regulation, stilbene derivatives SD1 and SD4 disrupt the binding between pA104R and DNA and inhibit the viral replication in primary alveolar macrophages. In terms of biological role, DNA-binding protein that plays a critical role in nucleoid compaction, genome replication and DNA replication and transcription. Binds to both ssDNA and dsDNA with a binding site covering about 15 nucleotides. Displays DNA-supercoiling activity only when associated with the viral DNA topoisomerase 2. The protein is Viral histone-like protein of African swine fever virus (strain Badajoz 1971 Vero-adapted) (Ba71V).